The chain runs to 545 residues: CTP synthase (545 aa).

The interval 1–265 (MTKYIFITGG…DEIVVKKLSL (265 aa)) is amidoligase domain. Serine 13 contributes to the CTP binding site. Serine 13 lines the UTP pocket. ATP contacts are provided by residues 14-19 (SLGKGI) and aspartate 71. Mg(2+) contacts are provided by aspartate 71 and glutamate 139. Residues 146–148 (DIE), 186–191 (KTKPTQ), and lysine 222 contribute to the CTP site. UTP is bound by residues 186 to 191 (KTKPTQ) and lysine 222. Residues 290–541 (KIAMVGKYTE…VLAARIHHQE (252 aa)) enclose the Glutamine amidotransferase type-1 domain. Glycine 351 is an L-glutamine binding site. The active-site Nucleophile; for glutamine hydrolysis is cysteine 378. L-glutamine is bound by residues 379–382 (LGMQ), glutamate 402, and arginine 469. Active-site residues include histidine 514 and glutamate 516.

The protein belongs to the CTP synthase family. In terms of assembly, homotetramer.

It carries out the reaction UTP + L-glutamine + ATP + H2O = CTP + L-glutamate + ADP + phosphate + 2 H(+). It catalyses the reaction L-glutamine + H2O = L-glutamate + NH4(+). The enzyme catalyses UTP + NH4(+) + ATP = CTP + ADP + phosphate + 2 H(+). It participates in pyrimidine metabolism; CTP biosynthesis via de novo pathway; CTP from UDP: step 2/2. Allosterically activated by GTP, when glutamine is the substrate; GTP has no effect on the reaction when ammonia is the substrate. The allosteric effector GTP functions by stabilizing the protein conformation that binds the tetrahedral intermediate(s) formed during glutamine hydrolysis. Inhibited by the product CTP, via allosteric rather than competitive inhibition. Its function is as follows. Catalyzes the ATP-dependent amination of UTP to CTP with either L-glutamine or ammonia as the source of nitrogen. Regulates intracellular CTP levels through interactions with the four ribonucleotide triphosphates. This Legionella pneumophila (strain Corby) protein is CTP synthase.